A 120-amino-acid chain; its full sequence is Glycine cleavage system H protein (120 aa).

One can recognise a Lipoyl-binding domain in the interval 17-99 (VATVGITAHA…QGDGWLYRLK (83 aa)). Lysine 58 carries the post-translational modification N6-lipoyllysine.

It belongs to the GcvH family. In terms of assembly, the glycine cleavage system is composed of four proteins: P, T, L and H. (R)-lipoate is required as a cofactor.

Its function is as follows. The glycine cleavage system catalyzes the degradation of glycine. The H protein shuttles the methylamine group of glycine from the P protein to the T protein. This is Glycine cleavage system H protein from Methylorubrum extorquens (strain PA1) (Methylobacterium extorquens).